A 608-amino-acid polypeptide reads, in one-letter code: Chaperone protein HtpG (608 aa).

Residues 1–332 (MQFQTEVNQL…VEDLPLNVSR (332 aa)) are a; substrate-binding. The interval 333–536 (EILQENQILK…KNKPDFAMQQ (204 aa)) is b. A c region spans residues 537 to 608 (LLKQMGQEQN…LTKIINKAFS (72 aa)).

The protein belongs to the heat shock protein 90 family. As to quaternary structure, homodimer.

Its subcellular location is the cytoplasm. Functionally, molecular chaperone. Has ATPase activity. The chain is Chaperone protein HtpG from Campylobacter jejuni subsp. jejuni serotype O:2 (strain ATCC 700819 / NCTC 11168).